A 576-amino-acid polypeptide reads, in one-letter code: Eukaryotic translation initiation factor 3 subunit L (576 aa).

The PCI domain occupies Asp330 to Arg536.

The protein belongs to the eIF-3 subunit L family. Component of the eukaryotic translation initiation factor 3 (eIF-3) complex, which is composed of 13 subunits: eif3a, eif3b, eif3c, eif3d, eif3e, eif3f, eif3g, eif3h, eif3i, eif3j, eif3k, eif3l and eif3m.

It localises to the cytoplasm. Functionally, component of the eukaryotic translation initiation factor 3 (eIF-3) complex, which is involved in protein synthesis of a specialized repertoire of mRNAs and, together with other initiation factors, stimulates binding of mRNA and methionyl-tRNAi to the 40S ribosome. The eIF-3 complex specifically targets and initiates translation of a subset of mRNAs involved in cell proliferation. This is Eukaryotic translation initiation factor 3 subunit L (eif3l) from Danio rerio (Zebrafish).